The chain runs to 411 residues: Epoxyqueuosine reductase (411 aa).

Asp171 acts as the Proton donor in catalysis. The 4Fe-4S ferredoxin-type domain occupies 213–245; the sequence is LPLPVDKPQEEQCGRCVACMTTCPTGAIVAPYT. [4Fe-4S] cluster contacts are provided by Cys225, Cys228, Cys231, Cys235, Cys251, Cys278, Cys281, and Cys285.

The protein belongs to the QueG family. Monomer. It depends on cob(II)alamin as a cofactor. Requires [4Fe-4S] cluster as cofactor.

Its subcellular location is the cytoplasm. The enzyme catalyses epoxyqueuosine(34) in tRNA + AH2 = queuosine(34) in tRNA + A + H2O. It functions in the pathway tRNA modification; tRNA-queuosine biosynthesis. Functionally, catalyzes the conversion of epoxyqueuosine (oQ) to queuosine (Q), which is a hypermodified base found in the wobble positions of tRNA(Asp), tRNA(Asn), tRNA(His) and tRNA(Tyr). This chain is Epoxyqueuosine reductase, found in Yersinia pestis.